Consider the following 630-residue polypeptide: Ribonucleoside-diphosphate reductase large subunit (630 aa).

Substrate contacts are provided by residues S67, 82–83 (AC), G111, 317–321 (NLCSE), and 459–463 (PNATS). The cysteines at positions 83 and 334 are disulfide-linked. Catalysis depends on N317, which acts as the Proton acceptor. The active-site Cysteine radical intermediate is the C319. The active-site Proton acceptor is E321.

Belongs to the ribonucleoside diphosphate reductase large chain family. Heterotetramer composed of a homodimer of the large subunit (R1) and a homodimer of the small subunit (R2). Larger multisubunit protein complex are also active, composed of (R1)n(R2)n.

It carries out the reaction a 2'-deoxyribonucleoside 5'-diphosphate + [thioredoxin]-disulfide + H2O = a ribonucleoside 5'-diphosphate + [thioredoxin]-dithiol. With respect to regulation, under complex allosteric control mediated by deoxynucleoside triphosphates and ATP binding. The type of nucleotide bound at the specificity site determines substrate preference. It seems probable that ATP makes the enzyme reduce CDP and UDP, dGTP favors ADP reduction and dTTP favors GDP reduction. Functionally, ribonucleoside-diphosphate reductase holoenzyme provides the precursors necessary for viral DNA synthesis. Allows virus growth in non-dividing cells. Catalyzes the biosynthesis of deoxyribonucleotides from the corresponding ribonucleotides. This is Ribonucleoside-diphosphate reductase large subunit from Aedes vexans (Inland floodwater mosquito).